The sequence spans 406 residues: Probable 26S proteasome regulatory subunit 10B (406 aa).

191 to 198 (GPPGTGKT) serves as a coordination point for ATP.

This sequence belongs to the AAA ATPase family.

Its subcellular location is the cytoplasm. It localises to the nucleus. In terms of biological role, the 26S proteasome is involved in the ATP-dependent degradation of ubiquitinated proteins. The regulatory (or ATPase) complex confers ATP dependency and substrate specificity to the 26S complex. The polypeptide is Probable 26S proteasome regulatory subunit 10B (rpt-4) (Caenorhabditis elegans).